Reading from the N-terminus, the 470-residue chain is ATP synthase subunit beta (470 aa).

Residue 157-164 (GGAGVGKT) coordinates ATP.

This sequence belongs to the ATPase alpha/beta chains family. In terms of assembly, F-type ATPases have 2 components, CF(1) - the catalytic core - and CF(0) - the membrane proton channel. CF(1) has five subunits: alpha(3), beta(3), gamma(1), delta(1), epsilon(1). CF(0) has three main subunits: a(1), b(2) and c(9-12). The alpha and beta chains form an alternating ring which encloses part of the gamma chain. CF(1) is attached to CF(0) by a central stalk formed by the gamma and epsilon chains, while a peripheral stalk is formed by the delta and b chains.

The protein resides in the cell inner membrane. The catalysed reaction is ATP + H2O + 4 H(+)(in) = ADP + phosphate + 5 H(+)(out). Its function is as follows. Produces ATP from ADP in the presence of a proton gradient across the membrane. The catalytic sites are hosted primarily by the beta subunits. This chain is ATP synthase subunit beta, found in Geotalea uraniireducens (strain Rf4) (Geobacter uraniireducens).